Consider the following 145-residue polypeptide: UPF0735 ACT domain-containing protein CPE1414 (145 aa).

The region spanning 69 to 144 (IFNMVVTHEK…GVEKVEFVAM (76 aa)) is the ACT domain.

The protein belongs to the UPF0735 family.

This is UPF0735 ACT domain-containing protein CPE1414 from Clostridium perfringens (strain 13 / Type A).